A 55-amino-acid chain; its full sequence is Small ribosomal subunit protein uS14 (55 aa).

Zn(2+) is bound by residues C20, C23, C38, and C41.

Belongs to the universal ribosomal protein uS14 family. The cofactor is Zn(2+).

This chain is Small ribosomal subunit protein uS14 (rps29), found in Dictyostelium discoideum (Social amoeba).